Reading from the N-terminus, the 396-residue chain is L-lactate dehydrogenase (396 aa).

One can recognise an FMN hydroxy acid dehydrogenase domain in the interval 1-380 (MIISAASDYR…TQDSLVQGLG (380 aa)). Tyr24 is a binding site for substrate. FMN-binding residues include Ser106 and Gln127. Residue Tyr129 coordinates substrate. Residue Thr155 coordinates FMN. Arg164 contacts substrate. Residue Lys251 coordinates FMN. His275 (proton acceptor) is an active-site residue. Position 278 (Arg278) interacts with substrate. 306–330 (DSGIRNGLDVVRMIALGADTILLGR) is a binding site for FMN.

The protein belongs to the FMN-dependent alpha-hydroxy acid dehydrogenase family. Requires FMN as cofactor.

The protein resides in the cell inner membrane. The enzyme catalyses (S)-lactate + A = pyruvate + AH2. Its function is as follows. Catalyzes the conversion of L-lactate to pyruvate. Is coupled to the respiratory chain. This Escherichia coli O81 (strain ED1a) protein is L-lactate dehydrogenase.